The following is an 856-amino-acid chain: Translation initiation factor IF-2 (856 aa).

2 disordered regions span residues 1 to 248 (MSDN…ARAR) and 254 to 273 (KRAR…QQKQ). Positions 22–38 (ETGQVKQSFSHGRSNTV) are enriched in polar residues. The segment covering 83 to 93 (APRPAPAPIPT) has biased composition (pro residues). Residues 100–150 (LERREQQERLLREAEEARMAALEETRRREERAKAEATEEERRRAEENRRAE) show a composition bias toward basic and acidic residues. Residues 156-196 (AAAAAAAAATAEAETAAAAPREEAPAAAGTAEEAPRTSSST) show a composition bias toward low complexity. Residues 197 to 209 (MPPPRRFTPVPSP) show a composition bias toward pro residues. The span at 210–229 (KRPEPPRPQQRDRKGDDRRQ) shows a compositional bias: basic and acidic residues. The region spanning 356-526 (PRPPVVTIMG…ELQAELLELK (171 aa)) is the tr-type G domain. Residues 365–372 (GHVDHGKT) are G1. 365–372 (GHVDHGKT) lines the GTP pocket. Residues 390–394 (GITQH) form a G2 region. The interval 412-415 (DTPG) is G3. GTP is bound by residues 412-416 (DTPGH) and 466-469 (NKMD). The G4 stretch occupies residues 466–469 (NKMD). The tract at residues 502 to 504 (SAL) is G5.

It belongs to the TRAFAC class translation factor GTPase superfamily. Classic translation factor GTPase family. IF-2 subfamily.

Its subcellular location is the cytoplasm. In terms of biological role, one of the essential components for the initiation of protein synthesis. Protects formylmethionyl-tRNA from spontaneous hydrolysis and promotes its binding to the 30S ribosomal subunits. Also involved in the hydrolysis of GTP during the formation of the 70S ribosomal complex. In Rhizorhabdus wittichii (strain DSM 6014 / CCUG 31198 / JCM 15750 / NBRC 105917 / EY 4224 / RW1) (Sphingomonas wittichii), this protein is Translation initiation factor IF-2.